A 151-amino-acid polypeptide reads, in one-letter code: Macrodomain Ter protein (151 aa).

This sequence belongs to the MatP family. In terms of assembly, homodimer.

The protein localises to the cytoplasm. In terms of biological role, required for spatial organization of the terminus region of the chromosome (Ter macrodomain) during the cell cycle. Prevents early segregation of duplicated Ter macrodomains during cell division. Binds specifically to matS, which is a 13 bp signature motif repeated within the Ter macrodomain. In Vibrio atlanticus (strain LGP32) (Vibrio splendidus (strain Mel32)), this protein is Macrodomain Ter protein.